Consider the following 518-residue polypeptide: Arginyl-tRNA--protein transferase 1 (518 aa).

Ser-169 carries the phosphoserine modification. Residues 175–203 form a disordered region; it reads EKLGSGEPSHSVKVHTVPKPGKGADLSKP.

It belongs to the R-transferase family. Monomer. Interacts with LIAT1; LIAT1 is not a substrate of ATE1, the interaction takes place in the cytoplasm and seems to increase ATE1 arginyltransferase activity.

The protein localises to the nucleus. The protein resides in the cytoplasm. The enzyme catalyses an N-terminal L-alpha-aminoacyl-[protein] + L-arginyl-tRNA(Arg) = an N-terminal L-arginyl-L-aminoacyl-[protein] + tRNA(Arg) + H(+). Functionally, involved in the post-translational conjugation of arginine to the N-terminal aspartate or glutamate of a protein. This arginylation is required for degradation of the protein via the ubiquitin pathway. Does not arginylate cysteine residues. This Homo sapiens (Human) protein is Arginyl-tRNA--protein transferase 1.